A 200-amino-acid polypeptide reads, in one-letter code: Ribonuclease HII (200 aa).

The 200-residue stretch at 1-200 (MRYGGVDEAG…EINKKLTDFI (200 aa)) folds into the RNase H type-2 domain. A divalent metal cation contacts are provided by D7, E8, and D99.

Belongs to the RNase HII family. Mn(2+) serves as cofactor. Requires Mg(2+) as cofactor.

Its subcellular location is the cytoplasm. It catalyses the reaction Endonucleolytic cleavage to 5'-phosphomonoester.. Endonuclease that specifically degrades the RNA of RNA-DNA hybrids. This Nanoarchaeum equitans (strain Kin4-M) protein is Ribonuclease HII.